Here is an 82-residue protein sequence, read N- to C-terminus: DNA-directed RNA polymerase subunit omega (82 aa).

This sequence belongs to the RNA polymerase subunit omega family. As to quaternary structure, the RNAP catalytic core consists of 2 alpha, 1 beta, 1 beta' and 1 omega subunit. When a sigma factor is associated with the core the holoenzyme is formed, which can initiate transcription.

The enzyme catalyses RNA(n) + a ribonucleoside 5'-triphosphate = RNA(n+1) + diphosphate. Functionally, promotes RNA polymerase assembly. Latches the N- and C-terminal regions of the beta' subunit thereby facilitating its interaction with the beta and alpha subunits. In Lachnoclostridium phytofermentans (strain ATCC 700394 / DSM 18823 / ISDg) (Clostridium phytofermentans), this protein is DNA-directed RNA polymerase subunit omega.